Here is a 273-residue protein sequence, read N- to C-terminus: Glutamate 5-kinase (273 aa).

Position 15 (Lys-15) interacts with ATP. The substrate site is built by Ser-55, Asp-142, and Asn-158. ATP-binding positions include 178-179 and 220-226; these read SD and TGGMLSK.

Belongs to the glutamate 5-kinase family.

It localises to the cytoplasm. It carries out the reaction L-glutamate + ATP = L-glutamyl 5-phosphate + ADP. It participates in amino-acid biosynthesis; L-proline biosynthesis; L-glutamate 5-semialdehyde from L-glutamate: step 1/2. Catalyzes the transfer of a phosphate group to glutamate to form L-glutamate 5-phosphate. This chain is Glutamate 5-kinase, found in Streptococcus pyogenes serotype M49 (strain NZ131).